Here is a 325-residue protein sequence, read N- to C-terminus: Tetraacyldisaccharide 4'-kinase (325 aa).

55-62 is a binding site for ATP; the sequence is TAGGNGKT.

This sequence belongs to the LpxK family.

The enzyme catalyses a lipid A disaccharide + ATP = a lipid IVA + ADP + H(+). The protein operates within glycolipid biosynthesis; lipid IV(A) biosynthesis; lipid IV(A) from (3R)-3-hydroxytetradecanoyl-[acyl-carrier-protein] and UDP-N-acetyl-alpha-D-glucosamine: step 6/6. Transfers the gamma-phosphate of ATP to the 4'-position of a tetraacyldisaccharide 1-phosphate intermediate (termed DS-1-P) to form tetraacyldisaccharide 1,4'-bis-phosphate (lipid IVA). The chain is Tetraacyldisaccharide 4'-kinase from Salmonella paratyphi B (strain ATCC BAA-1250 / SPB7).